The following is a 110-amino-acid chain: Endoribonuclease SymE (110 aa).

The region spanning 29-74 (SSYPEYTRIPAITLKGQWLEDAGFTTGTQVDVRVMNGCIVLTAQQP) is the SpoVT-AbrB domain.

It belongs to the SymE family.

The protein resides in the cytoplasm. Functionally, involved in the degradation and recycling of damaged RNA. It is itself a target for degradation by the ATP-dependent protease Lon. The chain is Endoribonuclease SymE from Salmonella choleraesuis (strain SC-B67).